We begin with the raw amino-acid sequence, 528 residues long: Major facilitator superfamily multidrug transporter mdr3 (528 aa).

The interval 1–37 (MLAMAASAEETNRQSNAGRRSVISPSEAPPEAEQSDV) is disordered. Helical transmembrane passes span 50-70 (FILI…YILI), 91-111 (WHVG…GKLG), 119-139 (ILVL…CSAF), 149-169 (ARAL…AIAG), 180-200 (MIFS…GVVG), 211-231 (WVMW…LWVI), and 241-261 (AATL…LLLL). Asn262 carries an N-linked (GlcNAc...) asparagine glycan. The next 5 helical transmembrane spans lie at 272-292 (GWST…LGLF), 340-360 (VITS…GCIL), 375-395 (FWSF…STTI), 410-430 (SLVN…AGTV), and 448-468 (ALWS…VFAV).

It belongs to the major facilitator superfamily.

Its subcellular location is the cell membrane. In terms of biological role, major facilitator superfamily transporter that confers resistance to azoles such as itraconazole. The sequence is that of Major facilitator superfamily multidrug transporter mdr3 from Aspergillus fumigatus (strain ATCC MYA-4609 / CBS 101355 / FGSC A1100 / Af293) (Neosartorya fumigata).